Consider the following 984-residue polypeptide: Translation initiation factor IF-2 (984 aa).

2 disordered regions span residues 92–267 (KKRT…ERRR) and 280–392 (MNAP…EEHV). Residues 104–123 (PATPEVQPVAEAPAAAPAAP) are compositionally biased toward low complexity. Positions 124-177 (RIDEAELARREEEARRQAELIRRQEEELAEKRRLREEAEAREREQAEKAERAEQ) are enriched in basic and acidic residues. The segment covering 193–235 (DAAAAAPAKEAAKPAAAPVAAAAAAAEQQAADTKLAAQTAATQ) has biased composition (low complexity). Basic and acidic residues-rich tracts occupy residues 236-267 (AKED…ERRR) and 291-302 (KAPEKPQPEKAA). A compositionally biased stretch (low complexity) spans 310-335 (PAAPAARPGAPAAPGAAAAPGAAGAG). Residues 351–361 (PAKKKEIKTRG) are compositionally biased toward basic and acidic residues. Gly residues predominate over residues 363–375 (ASGGVGRGNWRGG). Over residues 381–392 (GSNDRGGHEEHV) the composition is skewed to basic and acidic residues. One can recognise a tr-type G domain in the interval 484–653 (PRAPVVTVMG…LLQAEVLELK (170 aa)). Residues 493 to 500 (GHVDHGKT) form a G1 region. 493–500 (GHVDHGKT) contacts GTP. The G2 stretch occupies residues 518-522 (GITQH). The tract at residues 539–542 (DTPG) is G3. GTP contacts are provided by residues 539-543 (DTPGH) and 593-596 (NKID). Positions 593-596 (NKID) are G4. The segment at 629–631 (SAK) is G5.

Belongs to the TRAFAC class translation factor GTPase superfamily. Classic translation factor GTPase family. IF-2 subfamily.

The protein localises to the cytoplasm. In terms of biological role, one of the essential components for the initiation of protein synthesis. Protects formylmethionyl-tRNA from spontaneous hydrolysis and promotes its binding to the 30S ribosomal subunits. Also involved in the hydrolysis of GTP during the formation of the 70S ribosomal complex. The polypeptide is Translation initiation factor IF-2 (Variovorax paradoxus (strain S110)).